We begin with the raw amino-acid sequence, 151 residues long: Pseudo histidine-containing phosphotransfer protein 2 (151 aa).

Residues 38–133 (SPNFVEEVAA…ATLKQKLESY (96 aa)) form the HPt domain.

Functions as a two-component phosphorelay mediator between cytokinin sensor histidine kinases and response regulators (B-type ARRs). Plays an important role in propagating cytokinin signal transduction. The sequence is that of Pseudo histidine-containing phosphotransfer protein 2 from Oryza sativa subsp. japonica (Rice).